The primary structure comprises 161 residues: MSIVTKSIVNADAEARYLSPGELDRIKSFVLSGQRRLNIAQILTDNRENIVKQGGQQLFQKRTDIVSPGGNAYGEEMTATCLRDLDYYLRLVTYGIVAGDVTPIEEIGLVGVKEMYNSLGTPISGVAEGVRCMKAIACSLLSGEDSAEAGFYFDYTLGAMQ.

The residue at position 71 (Asn71) is an N4-methylasparagine. Cys81 is a binding site for (2R,3E)-phycocyanobilin.

It belongs to the phycobiliprotein family. In terms of assembly, heterodimer of an alpha and a beta chain. In terms of processing, contains one covalently linked phycocyanobilin chromophore.

Its subcellular location is the plastid. It localises to the chloroplast thylakoid membrane. Functionally, light-harvesting photosynthetic bile pigment-protein from the phycobiliprotein complex. Allophycocyanin has a maximum absorption at approximately 650 nanometers. In Aglaothamnion neglectum (Red alga), this protein is Allophycocyanin alpha chain (apcA).